The primary structure comprises 383 residues: ATP phosphoribosyltransferase regulatory subunit (383 aa).

This sequence belongs to the class-II aminoacyl-tRNA synthetase family. HisZ subfamily. As to quaternary structure, heteromultimer composed of HisG and HisZ subunits.

Its subcellular location is the cytoplasm. The protein operates within amino-acid biosynthesis; L-histidine biosynthesis; L-histidine from 5-phospho-alpha-D-ribose 1-diphosphate: step 1/9. In terms of biological role, required for the first step of histidine biosynthesis. May allow the feedback regulation of ATP phosphoribosyltransferase activity by histidine. This chain is ATP phosphoribosyltransferase regulatory subunit, found in Neisseria meningitidis serogroup C / serotype 2a (strain ATCC 700532 / DSM 15464 / FAM18).